We begin with the raw amino-acid sequence, 227 residues long: Transcriptional regulatory protein TdiR (227 aa).

Positions 11-125 (TVFVVDDEAS…DLLDAVNAAL (115 aa)) constitute a Response regulatory domain. The residue at position 60 (D60) is a 4-aspartylphosphate. The HTH luxR-type domain occupies 141 to 206 (HLDLLATLSQ…DLMHFVMRGS (66 aa)). Positions 165-184 (SKEIAKLLGISYKTVEAHRG) form a DNA-binding region, H-T-H motif.

Post-translationally, phosphorylated by TdiS.

Member of the two-component regulatory system TdiR/TdiS, which probably regulates transcription of toluene catabolic genes (bss operon). Binds to DNA. In Thauera aromatica, this protein is Transcriptional regulatory protein TdiR (tdiR).